The chain runs to 138 residues: Gastrula zinc finger protein XlCGF44.2 (138 aa).

5 consecutive C2H2-type zinc fingers follow at residues 5–27 (FACT…KRIH), 32–54 (FVCA…QRLH), 60–82 (FTCT…QQIH), 88–110 (YVCS…MKTH), and 116–138 (FACS…QESH).

The protein belongs to the krueppel C2H2-type zinc-finger protein family.

The protein resides in the nucleus. May be involved in transcriptional regulation. The polypeptide is Gastrula zinc finger protein XlCGF44.2 (Xenopus laevis (African clawed frog)).